The chain runs to 246 residues: Probable transcriptional regulatory protein Teth39_1009 (246 aa).

Positions 1–21 (MSGHSKWANIKHKKEKMDAKK) are disordered.

Belongs to the TACO1 family.

The protein resides in the cytoplasm. This is Probable transcriptional regulatory protein Teth39_1009 from Thermoanaerobacter pseudethanolicus (strain ATCC 33223 / 39E) (Clostridium thermohydrosulfuricum).